Reading from the N-terminus, the 985-residue chain is Regulator of telomere elongation helicase 1 homolog (985 aa).

The region spanning 7–303 (AGIPVHFPFE…QDMAGDEPKD (297 aa)) is the Helicase ATP-binding domain. Residue 42 to 49 (SPTGTGKT) participates in ATP binding. [4Fe-4S] cluster is bound by residues cysteine 146, cysteine 164, cysteine 173, and cysteine 209. Residues 252 to 255 (DEAH) carry the DEAH box motif. Positions 863 to 883 (VKIHKRERSSPTAPESSSQVT) are disordered. Positions 872–882 (SPTAPESSSQV) are enriched in polar residues. Threonine 874 carries the post-translational modification Phosphothreonine.

The protein belongs to the helicase family. RAD3/XPD subfamily. Expressed in both male germline and somatic cells (at protein level). Expressed in ovarian germline stem cells (at protein level). Expressed in adult testes (at protein level). Expressed in the germarium including germline stem cells.

The protein localises to the nucleus. Its subcellular location is the chromosome. It carries out the reaction ATP + H2O = ADP + phosphate + H(+). Its function is as follows. A probable ATP-dependent DNA helicase implicated in DNA repair and the maintenance of genomic stability. Acts as an anti-recombinase to counteract toxic recombination and limit crossover during meiosis. Regulates meiotic recombination and crossover homeostasis by physically dissociating strand invasion events and thereby promotes noncrossover repair by meiotic synthesis dependent strand annealing (SDSA) as well as disassembly of D loop recombination intermediates. In male germline stem cells (GSCs), plays a role in GSCs maintenance during larval germline development by modulating the expression of genes such as Stat92E and preventing DNA damage-induced checkpoint activation. May play a role in female germline stem cell maintenance. The polypeptide is Regulator of telomere elongation helicase 1 homolog (Drosophila melanogaster (Fruit fly)).